The following is a 429-amino-acid chain: Ribonuclease E/G-like protein (429 aa).

Residues Asp-290 and Asp-332 each contribute to the Mg(2+) site.

Belongs to the RNase E/G family. Mg(2+) is required as a cofactor.

The protein resides in the plastid. Its subcellular location is the chloroplast stroma. Involved in intercistronic processing of primary transcripts from chloroplast operons. The endonucleolytic activity of the enzyme depends on the number of phosphates at the 5' end, is inhibited by structured RNA, and preferentially cleaves A/U-rich sequences. This is Ribonuclease E/G-like protein (rne) from Guillardia theta (Cryptophyte).